The primary structure comprises 1216 residues: DNA-directed RNA polymerase subunit beta' (1216 aa).

Residues cysteine 60, cysteine 62, cysteine 75, and cysteine 78 each contribute to the Zn(2+) site. Residues aspartate 450, aspartate 452, and aspartate 454 each contribute to the Mg(2+) site. Positions 819, 893, 900, and 903 each coordinate Zn(2+).

This sequence belongs to the RNA polymerase beta' chain family. The RNAP catalytic core consists of 2 alpha, 1 beta, 1 beta' and 1 omega subunit. When a sigma factor is associated with the core the holoenzyme is formed, which can initiate transcription. Mg(2+) is required as a cofactor. The cofactor is Zn(2+).

The enzyme catalyses RNA(n) + a ribonucleoside 5'-triphosphate = RNA(n+1) + diphosphate. Functionally, DNA-dependent RNA polymerase catalyzes the transcription of DNA into RNA using the four ribonucleoside triphosphates as substrates. This is DNA-directed RNA polymerase subunit beta' from Streptococcus agalactiae serotype Ia (strain ATCC 27591 / A909 / CDC SS700).